The chain runs to 807 residues: Carbamoyltransferase HypF2 (807 aa).

An Acylphosphatase-like domain is found at Arg14–Glu101. 2 consecutive C4-type zinc fingers follow at residues Cys120–Cys145 and Cys170–Cys195. Residues Val212–Gly415 enclose the YrdC-like domain. The interval Trp663–Val682 is disordered.

This sequence belongs to the carbamoyltransferase HypF family.

It catalyses the reaction C-terminal L-cysteinyl-[HypE protein] + carbamoyl phosphate + ATP + H2O = C-terminal S-carboxamide-L-cysteinyl-[HypE protein] + AMP + phosphate + diphosphate + H(+). It functions in the pathway protein modification; [NiFe] hydrogenase maturation. Functionally, involved in the maturation of [NiFe] hydrogenases. Along with HypE, it catalyzes the synthesis of the CN ligands of the active site iron of [NiFe]-hydrogenases. HypF functions as a carbamoyl transferase using carbamoylphosphate as a substrate and transferring the carboxamido moiety in an ATP-dependent reaction to the thiolate of the C-terminal cysteine of HypE yielding a protein-S-carboxamide. This is Carbamoyltransferase HypF2 (hypF2) from Cupriavidus necator (strain ATCC 17699 / DSM 428 / KCTC 22496 / NCIMB 10442 / H16 / Stanier 337) (Ralstonia eutropha).